Consider the following 435-residue polypeptide: Adenylosuccinate synthetase (435 aa).

GTP-binding positions include 11-17 (GDEGKGK) and 39-41 (GHT). Asp-12 serves as the catalytic Proton acceptor. Mg(2+) is bound by residues Asp-12 and Gly-39. Residues 12 to 15 (DEGK), 37 to 40 (NAGH), Thr-128, Arg-142, Gln-223, Thr-238, and Arg-302 contribute to the IMP site. The active-site Proton donor is the His-40. Residue 298 to 304 (SVTGRPR) participates in substrate binding. Residues Arg-304, 330-332 (KLD), and 412-414 (STG) contribute to the GTP site.

The protein belongs to the adenylosuccinate synthetase family. In terms of assembly, homodimer. It depends on Mg(2+) as a cofactor.

It localises to the cytoplasm. The catalysed reaction is IMP + L-aspartate + GTP = N(6)-(1,2-dicarboxyethyl)-AMP + GDP + phosphate + 2 H(+). Its pathway is purine metabolism; AMP biosynthesis via de novo pathway; AMP from IMP: step 1/2. Its function is as follows. Plays an important role in the de novo pathway of purine nucleotide biosynthesis. Catalyzes the first committed step in the biosynthesis of AMP from IMP. The sequence is that of Adenylosuccinate synthetase from Coxiella burnetii (strain RSA 493 / Nine Mile phase I).